The primary structure comprises 210 residues: Leucyl/phenylalanyl-tRNA--protein transferase (210 aa).

Belongs to the L/F-transferase family.

Its subcellular location is the cytoplasm. The enzyme catalyses N-terminal L-lysyl-[protein] + L-leucyl-tRNA(Leu) = N-terminal L-leucyl-L-lysyl-[protein] + tRNA(Leu) + H(+). The catalysed reaction is N-terminal L-arginyl-[protein] + L-leucyl-tRNA(Leu) = N-terminal L-leucyl-L-arginyl-[protein] + tRNA(Leu) + H(+). It carries out the reaction L-phenylalanyl-tRNA(Phe) + an N-terminal L-alpha-aminoacyl-[protein] = an N-terminal L-phenylalanyl-L-alpha-aminoacyl-[protein] + tRNA(Phe). Functionally, functions in the N-end rule pathway of protein degradation where it conjugates Leu, Phe and, less efficiently, Met from aminoacyl-tRNAs to the N-termini of proteins containing an N-terminal arginine or lysine. This Roseobacter denitrificans (strain ATCC 33942 / OCh 114) (Erythrobacter sp. (strain OCh 114)) protein is Leucyl/phenylalanyl-tRNA--protein transferase.